A 120-amino-acid chain; its full sequence is GATA transcription factor 23 (120 aa).

Residues 22–76 form a GATA-type zinc finger; it reads KGTIRCCSECKTTKTPMWRGGPTGPKSLCNACGIRHRKQRRSELLGIHIIRSHKS.

This sequence belongs to the type IV zinc-finger family. Class B subfamily.

It localises to the nucleus. Functionally, transcriptional regulator that specifically binds 5'-GATA-3' or 5'-GAT-3' motifs within gene promoters. The chain is GATA transcription factor 23 (GATA23) from Arabidopsis thaliana (Mouse-ear cress).